Reading from the N-terminus, the 348-residue chain is N-formyl peptide receptor 2 (348 aa).

N-linked (GlcNAc...) asparagine glycosylation is present at Asn-1. Topologically, residues 1-24 are extracellular; that stretch reads NFSTPLNEYEEGSYESAGYTVLRI. Residues 25–47 form a helical membrane-spanning segment; sequence LPLVVLGVTFVLGVLGNGLVIWV. Topologically, residues 48 to 58 are cytoplasmic; that stretch reads AGFRMTRTVTT. The chain crosses the membrane as a helical span at residues 59-80; it reads ICYLNLALADFSFTATLPFLIV. Topologically, residues 81-97 are extracellular; that stretch reads SMAMGEKWPFGWFLCKL. Cys-95 and Cys-173 are oxidised to a cystine. A helical transmembrane segment spans residues 98–118; sequence IHIVVDINLFGSVFLIGFIAL. Topologically, residues 119–137 are cytoplasmic; sequence DRCICVLHPVWAQNHRTVS. A helical transmembrane segment spans residues 138–159; that stretch reads LAMKVIVGPWILALVLTLPVFL. The Extracellular segment spans residues 160 to 202; the sequence is FLTTVTIPNGDTYCTFNFASWGGTPEERLKVAITLLTARGIIR. The chain crosses the membrane as a helical span at residues 203–223; that stretch reads FVIGFSLPMSIVAICYGLIAA. Over 224–239 the chain is Cytoplasmic; it reads KIHKKGMIKSSRPLRV. A helical transmembrane segment spans residues 240 to 263; that stretch reads LTAVVASFFICWFPFQLVALLGTV. At 264–283 the chain is on the extracellular side; the sequence is WLKEMLFYGKYKIIDILVNP. A helical transmembrane segment spans residues 284-303; the sequence is TSSLAFFNCCLNPMLYVFVG. The Cytoplasmic portion of the chain corresponds to 304-348; it reads QDFRERLIHSLPTSLERALSEDSAPTNDTAANCASPPAETELQAM. Residues 322–348 form a disordered region; the sequence is LSEDSAPTNDTAANCASPPAETELQAM. Over residues 326–335 the composition is skewed to polar residues; sequence SAPTNDTAAN.

The protein belongs to the G-protein coupled receptor 1 family. In terms of assembly, interacts with Amyloid-beta protein 42, product of APP; the interaction takes place at the cell surface and the complex is then rapidly internalized.

It is found in the cell membrane. Low affinity receptor for N-formyl-methionyl peptides, which are powerful neutrophil chemotactic factors. Binding of FMLP to the receptor causes activation of neutrophils. This response is mediated via a G-protein that activates a phosphatidylinositol-calcium second messenger system. Receptor for the chemokine-like protein FAM19A5, mediating FAM19A5-stimulated macrophage chemotaxis and the inhibitory effect on TNFSF11/RANKL-induced osteoclast differentiation. This chain is N-formyl peptide receptor 2 (FPR2), found in Pan troglodytes (Chimpanzee).